Reading from the N-terminus, the 70-residue chain is Large ribosomal subunit protein bL31 (70 aa).

The Zn(2+) site is built by Cys-16, Cys-18, Cys-38, and Cys-41.

The protein belongs to the bacterial ribosomal protein bL31 family. Type A subfamily. In terms of assembly, part of the 50S ribosomal subunit. It depends on Zn(2+) as a cofactor.

In terms of biological role, binds the 23S rRNA. This chain is Large ribosomal subunit protein bL31, found in Vesicomyosocius okutanii subsp. Calyptogena okutanii (strain HA).